Here is a 112-residue protein sequence, read N- to C-terminus: T cell receptor alpha variable 7 (112 aa).

The first 21 residues, 1-21 (MEKMRRPVLIIFCLCLGWANG), serve as a signal peptide directing secretion. Positions 22 to 112 (ENQVEHSPHF…DSATYFCAVD (91 aa)) constitute an Ig-like domain. Cys44 and Cys109 are disulfide-bonded. N-linked (GlcNAc...) asparagine glycosylation is found at Asn84 and Asn90.

As to quaternary structure, alpha-beta TR is a heterodimer composed of an alpha and beta chain; disulfide-linked. The alpha-beta TR is associated with the transmembrane signaling CD3 coreceptor proteins to form the TR-CD3 (TcR or TCR). The assembly of alpha-beta TR heterodimers with CD3 occurs in the endoplasmic reticulum where a single alpha-beta TR heterodimer associates with one CD3D-CD3E heterodimer, one CD3G-CD3E heterodimer and one CD247 homodimer forming a stable octameric structure. CD3D-CD3E and CD3G-CD3E heterodimers preferentially associate with TR alpha and TR beta chains, respectively. The association of the CD247 homodimer is the last step of TcR assembly in the endoplasmic reticulum and is required for transport to the cell surface.

It localises to the cell membrane. In terms of biological role, v region of the variable domain of T cell receptor (TR) alpha chain that participates in the antigen recognition. Alpha-beta T cell receptors are antigen specific receptors which are essential to the immune response and are present on the cell surface of T lymphocytes. Recognize peptide-major histocompatibility (MH) (pMH) complexes that are displayed by antigen presenting cells (APC), a prerequisite for efficient T cell adaptive immunity against pathogens. Binding of alpha-beta TR to pMH complex initiates TR-CD3 clustering on the cell surface and intracellular activation of LCK that phosphorylates the ITAM motifs of CD3G, CD3D, CD3E and CD247 enabling the recruitment of ZAP70. In turn ZAP70 phosphorylates LAT, which recruits numerous signaling molecules to form the LAT signalosome. The LAT signalosome propagates signal branching to three major signaling pathways, the calcium, the mitogen-activated protein kinase (MAPK) kinase and the nuclear factor NF-kappa-B (NF-kB) pathways, leading to the mobilization of transcription factors that are critical for gene expression and essential for T cell growth and differentiation. The T cell repertoire is generated in the thymus, by V-(D)-J rearrangement. This repertoire is then shaped by intrathymic selection events to generate a peripheral T cell pool of self-MH restricted, non-autoaggressive T cells. Post-thymic interaction of alpha-beta TR with the pMH complexes shapes TR structural and functional avidity. The polypeptide is T cell receptor alpha variable 7 (Homo sapiens (Human)).